Consider the following 490-residue polypeptide: Betaine aldehyde dehydrogenase (490 aa).

3 residues coordinate K(+): threonine 26, isoleucine 27, and aspartate 93. 150–152 contacts NAD(+); sequence GAW. Lysine 162 functions as the Charge relay system in the catalytic mechanism. 176–179 contributes to the NAD(+) binding site; sequence KPSE. Valine 180 lines the K(+) pocket. 230 to 233 lines the NAD(+) pocket; the sequence is GVAS. Residue leucine 246 participates in K(+) binding. The active-site Proton acceptor is glutamate 252. Positions 254, 286, and 387 each coordinate NAD(+). Cysteine 286 functions as the Nucleophile in the catalytic mechanism. Cysteine 286 bears the Cysteine sulfenic acid (-SOH) mark. K(+) contacts are provided by lysine 457 and glycine 460. Glutamate 464 functions as the Charge relay system in the catalytic mechanism.

It belongs to the aldehyde dehydrogenase family. In terms of assembly, dimer of dimers. The cofactor is K(+).

The catalysed reaction is betaine aldehyde + NAD(+) + H2O = glycine betaine + NADH + 2 H(+). It functions in the pathway amine and polyamine biosynthesis; betaine biosynthesis via choline pathway; betaine from betaine aldehyde: step 1/1. Involved in the biosynthesis of the osmoprotectant glycine betaine. Catalyzes the irreversible oxidation of betaine aldehyde to the corresponding acid. This chain is Betaine aldehyde dehydrogenase, found in Escherichia coli O7:K1 (strain IAI39 / ExPEC).